Reading from the N-terminus, the 426-residue chain is Tubby protein homolog 1 (426 aa).

The tract at residues Gln-16–Arg-28 is required for localization to cilia in AWB sensory neurons. Residues Met-19–Ser-39 are disordered.

Belongs to the TUB family. As to quaternary structure, interacts with rgb-3. In terms of tissue distribution, expressed in ciliated sensory neurons.

Its subcellular location is the cytoplasm. The protein resides in the cell projection. It localises to the axon. It is found in the dendrite. The protein localises to the cilium. In terms of biological role, has a role in fat regulation independent of daf-16. Implicated in ciliar sensory function which is required for normal sensory behavior such as chemotaxis. Required for extension and growth of sensory neuronal cilia during postembryonic development, potentially via mediating signaling protein transport and localization of PI(4,5)P2 to the ciliary base. Functions in life span control via the insulin/IGF-1 pathway. Thought to be involved in neuronal trafficking. The chain is Tubby protein homolog 1 from Caenorhabditis elegans.